We begin with the raw amino-acid sequence, 423 residues long: MLDTLLINIGQLLTMDQEDGLLRREAMNTLPVIENGAVGIENGVVTFVGTAEEAKGLQAKEVIDCDGKMVSPGLVDPHTHLVFGGSRENEIALKLQGVPYLEILEQGGGILSTVNATKQASKEELVQKAKFHLDRMLSFGVTTVEAKSGYGLDDETEWKQLEATAQLQKEHSIDLVSTFLGAHAVPKEYKGRSKEFLQWMLDLLPEMKEKQLAEFVDIFCETGVFSVEESKEFLLKAKELGFDVKIHADEIDPLGGAEAAAEIGAASADHLVGASDKGIEMLANSNTVATLLPGTTFYLNKESFARGRKMIDEGVAVALATDFNPGSCPTENIQLIMSIAMLKLKMTPEEVWNAVTVNSSYAINRGDVAGKIRVGRKADLVLWDAYNYAYVPYHYGVSHVNTVWKNGNIAYTRGEQSWSTATI.

2 residues coordinate Fe(3+): H78 and H80. Zn(2+) contacts are provided by H78 and H80. 3 residues coordinate 4-imidazolone-5-propanoate: R87, Y150, and H183. Y150 contributes to the N-formimidoyl-L-glutamate binding site. H247 lines the Fe(3+) pocket. H247 provides a ligand contact to Zn(2+). E250 is a 4-imidazolone-5-propanoate binding site. D322 is a Fe(3+) binding site. D322 contacts Zn(2+). N-formimidoyl-L-glutamate contacts are provided by N324 and G326. Residue S327 coordinates 4-imidazolone-5-propanoate.

The protein belongs to the metallo-dependent hydrolases superfamily. HutI family. It depends on Zn(2+) as a cofactor. Requires Fe(3+) as cofactor.

It is found in the cytoplasm. The catalysed reaction is 4-imidazolone-5-propanoate + H2O = N-formimidoyl-L-glutamate. The protein operates within amino-acid degradation; L-histidine degradation into L-glutamate; N-formimidoyl-L-glutamate from L-histidine: step 3/3. Catalyzes the hydrolytic cleavage of the carbon-nitrogen bond in imidazolone-5-propanoate to yield N-formimidoyl-L-glutamate. It is the third step in the universal histidine degradation pathway. This chain is Imidazolonepropionase, found in Bacillus mycoides (strain KBAB4) (Bacillus weihenstephanensis).